The sequence spans 405 residues: S-adenosylmethionine synthase (405 aa).

Residue His-22 participates in ATP binding. A Mg(2+)-binding site is contributed by Asp-24. Residue Glu-50 coordinates K(+). Residues Glu-63 and Gln-107 each coordinate L-methionine. Residues 107–117 are flexible loop; the sequence is QSPDIAQGVDR. ATP-binding positions include 184–186, 250–251, Asp-259, 265–266, Ala-282, and Lys-286; these read DGK, RF, and RK. Residue Asp-259 participates in L-methionine binding. Lys-290 provides a ligand contact to L-methionine.

Belongs to the AdoMet synthase family. In terms of assembly, homotetramer; dimer of dimers. The cofactor is Mg(2+). K(+) is required as a cofactor.

It is found in the cytoplasm. The catalysed reaction is L-methionine + ATP + H2O = S-adenosyl-L-methionine + phosphate + diphosphate. Its pathway is amino-acid biosynthesis; S-adenosyl-L-methionine biosynthesis; S-adenosyl-L-methionine from L-methionine: step 1/1. Catalyzes the formation of S-adenosylmethionine (AdoMet) from methionine and ATP. The overall synthetic reaction is composed of two sequential steps, AdoMet formation and the subsequent tripolyphosphate hydrolysis which occurs prior to release of AdoMet from the enzyme. The chain is S-adenosylmethionine synthase from Roseiflexus sp. (strain RS-1).